The following is a 208-amino-acid chain: Ribosomal RNA small subunit methyltransferase G (208 aa).

S-adenosyl-L-methionine contacts are provided by residues Gly-75, Leu-80, 126-127, and Arg-141; that span reads VE.

It belongs to the methyltransferase superfamily. RNA methyltransferase RsmG family.

Its subcellular location is the cytoplasm. It carries out the reaction guanosine(527) in 16S rRNA + S-adenosyl-L-methionine = N(7)-methylguanosine(527) in 16S rRNA + S-adenosyl-L-homocysteine. In terms of biological role, specifically methylates the N7 position of guanine in position 527 of 16S rRNA. This Marinomonas sp. (strain MWYL1) protein is Ribosomal RNA small subunit methyltransferase G.